The following is a 512-amino-acid chain: Gustatory and odorant receptor 63a (512 aa).

A disordered region spans residues 1–24 (MRPSGEKVVKGHGQGNSGHSLSGM). Topologically, residues 1-129 (MRPSGEKVVK…PARAKFEMNS (129 aa)) are cytoplasmic. Residues 130–150 (ASFIYSVVFFVLLACYVGYVA) form a helical membrane-spanning segment. Over 151-166 (NNRIHIVRSLSGPFEE) the chain is Extracellular. A helical transmembrane segment spans residues 167 to 187 (AVIAYLFLVNILPIMIIPILW). The Cytoplasmic segment spans residues 188–222 (YEARKIAKLFNDWDDFEVLYYQISGHSLPLKLRQK). A helical membrane pass occupies residues 223 to 243 (AVYIAIVLPILSVLSVVITHV). At 244-265 (TMSDLNINQVVPYCILDNLTAM) the chain is on the extracellular side. A glycan (N-linked (GlcNAc...) asparagine) is linked at Asn-261. A helical transmembrane segment spans residues 266–285 (LGAWWFLICEAMSITAHLLA). At 286–324 (ERFQKALKHIGPAAMVADYRVLWLRLSKLTRDTGNALCY) the chain is on the cytoplasmic side. Residues 325-345 (TFVFMSLYLFFIITLSIYGLM) form a helical membrane-spanning segment. Residues 346–350 (SQLSE) are Extracellular-facing. The chain crosses the membrane as a helical span at residues 351–371 (GFGIKDIGLTITALWNIGLLF). Residues 372–436 (YICDEAHYAS…FFDVNRTLFK (65 aa)) lie on the Cytoplasmic side of the membrane. Residues 437–457 (GLLTTMVTYLVVLLQFQISIP) form a helical membrane-spanning segment. At 458–512 (TDKGDSEGANNITVVDFVMDSLDNDMSLMGASTLSTTTVGTTLPPPIMKLKGRKG) the chain is on the extracellular side. Asn-468 is a glycosylation site (N-linked (GlcNAc...) asparagine).

It belongs to the insect chemoreceptor superfamily. Gustatory receptor (GR) family. Gr21a subfamily. As to quaternary structure, gr21a and Gr63a probably form a heterodimer that responds to CO(2). Expressed in the medial aspect of the third antennal segment. Carbon dioxide-responsive neurons coexpress Gr21a and Gr63a in a pair of chemosensory receptors at both larval and adult life stages.

The protein resides in the cell membrane. In terms of biological role, gustatory and odorant receptor which mediates acceptance or avoidance behavior, depending on its substrates. Gr21a and Gr63a together are sufficient for carbon dioxide detection and avoidance behavior. It is possible that the CO(2) receptors Gr63a and Gr21a activate the TRPC channels through Galpha49B and Plc21C. This innate olfactory avoidance behavior can be inhibited by inhibitory interactions of the odors such as 1-hexanol and 2,3-butanedione with Gr21a and Gr63a. The sequence is that of Gustatory and odorant receptor 63a (Gr63a) from Drosophila melanogaster (Fruit fly).